Consider the following 103-residue polypeptide: Protein FMC1 homolog (103 aa).

The protein belongs to the FMC1 family.

In Nematostella vectensis (Starlet sea anemone), this protein is Protein FMC1 homolog.